Reading from the N-terminus, the 92-residue chain is Small ribosomal subunit protein uS19 (92 aa).

It belongs to the universal ribosomal protein uS19 family.

In terms of biological role, protein S19 forms a complex with S13 that binds strongly to the 16S ribosomal RNA. The polypeptide is Small ribosomal subunit protein uS19 (Brucella anthropi (strain ATCC 49188 / DSM 6882 / CCUG 24695 / JCM 21032 / LMG 3331 / NBRC 15819 / NCTC 12168 / Alc 37) (Ochrobactrum anthropi)).